The chain runs to 226 residues: Chalcone--flavanone isomerase 1 (226 aa).

Substrate is bound by residues T52, N117, and T194.

Belongs to the chalcone isomerase family.

The catalysed reaction is a chalcone = a flavanone.. Its pathway is secondary metabolite biosynthesis; flavonoid biosynthesis. Its function is as follows. Catalyzes the intramolecular cyclization of bicyclic chalcones into tricyclic (S)-flavanones. Responsible for the isomerization of 4,2',4',6'-tetrahydroxychalcone (also termed chalcone) into naringenin. This chain is Chalcone--flavanone isomerase 1 (CHI1), found in Lotus japonicus (Lotus corniculatus var. japonicus).